A 336-amino-acid polypeptide reads, in one-letter code: Protein-glutamate methylesterase/protein-glutamine glutaminase 1 (336 aa).

The region spanning 2–119 (KIAIVNDMPM…GNAQEAAAPL (118 aa)) is the Response regulatory domain. A 4-aspartylphosphate modification is found at Asp-53. A CheB-type methylesterase domain is found at 143–336 (PLRSGAPRQS…APRLLEIFAK (194 aa)). Residues Ser-159, His-186, and Asp-279 contribute to the active site.

This sequence belongs to the CheB family. Post-translationally, phosphorylated by CheA. Phosphorylation of the N-terminal regulatory domain activates the methylesterase activity.

It localises to the cytoplasm. The enzyme catalyses [protein]-L-glutamate 5-O-methyl ester + H2O = L-glutamyl-[protein] + methanol + H(+). It catalyses the reaction L-glutaminyl-[protein] + H2O = L-glutamyl-[protein] + NH4(+). In terms of biological role, involved in chemotaxis. Part of a chemotaxis signal transduction system that modulates chemotaxis in response to various stimuli. Catalyzes the demethylation of specific methylglutamate residues introduced into the chemoreceptors (methyl-accepting chemotaxis proteins or MCP) by CheR. Also mediates the irreversible deamidation of specific glutamine residues to glutamic acid. This is Protein-glutamate methylesterase/protein-glutamine glutaminase 1 from Pseudomonas fluorescens (strain ATCC BAA-477 / NRRL B-23932 / Pf-5).